Here is a 253-residue protein sequence, read N- to C-terminus: Indole-3-glycerol phosphate synthase (253 aa).

Belongs to the TrpC family.

It catalyses the reaction 1-(2-carboxyphenylamino)-1-deoxy-D-ribulose 5-phosphate + H(+) = (1S,2R)-1-C-(indol-3-yl)glycerol 3-phosphate + CO2 + H2O. It participates in amino-acid biosynthesis; L-tryptophan biosynthesis; L-tryptophan from chorismate: step 4/5. This is Indole-3-glycerol phosphate synthase from Petrotoga mobilis (strain DSM 10674 / SJ95).